We begin with the raw amino-acid sequence, 263 residues long: Mediator of RNA polymerase II transcription subunit 4 (263 aa).

The stretch at 61–111 forms a coiled coil; sequence LQLAAEQAGIEKNMDALREQVRKQDEEINQLQRQLKEAEQILATSIFQARQ. Disordered regions lie at residues 209–228 and 235–263; these read APNQ…MGAG and DTRA…SDSQ. Low complexity predominate over residues 251–263; sequence STESSSSSSSDSQ.

Belongs to the Mediator complex subunit 4 family. As to quaternary structure, component of the Mediator complex.

It localises to the nucleus. Its function is as follows. Component of the Mediator complex, a coactivator involved in the regulated transcription of nearly all RNA polymerase II-dependent genes. Mediator functions as a bridge to convey information from gene-specific regulatory proteins to the basal RNA polymerase II transcription machinery. Mediator is recruited to promoters by direct interactions with regulatory proteins and serves as a scaffold for the assembly of a functional preinitiation complex with RNA polymerase II and the general transcription factors. This chain is Mediator of RNA polymerase II transcription subunit 4 (MED4), found in Anopheles gambiae (African malaria mosquito).